Here is a 209-residue protein sequence, read N- to C-terminus: Transmembrane protein 52 (209 aa).

The N-terminal stretch at 1–32 is a signal peptide; that stretch reads MARGPLAARGLRLLLPLLPLLPLLPLPQVALG. The helical transmembrane segment at 56–76 threads the bilayer; the sequence is VGLILLAVLLLLLCGVTAGCV. Residues 145–209 form a disordered region; that stretch reads AYSLYTPEPP…QLPPCSPGAP (65 aa). Positions 159–170 are enriched in basic and acidic residues; the sequence is EAVKMAKPREEG. Over residues 186–202 the composition is skewed to polar residues; the sequence is LETTPVPQESGPNTQLP.

It localises to the membrane. This chain is Transmembrane protein 52 (TMEM52), found in Homo sapiens (Human).